Consider the following 181-residue polypeptide: ATP synthase subunit delta (181 aa).

The protein belongs to the ATPase delta chain family. F-type ATPases have 2 components, F(1) - the catalytic core - and F(0) - the membrane proton channel. F(1) has five subunits: alpha(3), beta(3), gamma(1), delta(1), epsilon(1). F(0) has three main subunits: a(1), b(2) and c(10-14). The alpha and beta chains form an alternating ring which encloses part of the gamma chain. F(1) is attached to F(0) by a central stalk formed by the gamma and epsilon chains, while a peripheral stalk is formed by the delta and b chains.

The protein resides in the cell inner membrane. Functionally, f(1)F(0) ATP synthase produces ATP from ADP in the presence of a proton or sodium gradient. F-type ATPases consist of two structural domains, F(1) containing the extramembraneous catalytic core and F(0) containing the membrane proton channel, linked together by a central stalk and a peripheral stalk. During catalysis, ATP synthesis in the catalytic domain of F(1) is coupled via a rotary mechanism of the central stalk subunits to proton translocation. This protein is part of the stalk that links CF(0) to CF(1). It either transmits conformational changes from CF(0) to CF(1) or is implicated in proton conduction. The chain is ATP synthase subunit delta from Syntrophus aciditrophicus (strain SB).